A 315-amino-acid chain; its full sequence is Methionyl-tRNA formyltransferase (315 aa).

113 to 116 (SILP) contributes to the (6S)-5,6,7,8-tetrahydrofolate binding site.

Belongs to the Fmt family.

The enzyme catalyses L-methionyl-tRNA(fMet) + (6R)-10-formyltetrahydrofolate = N-formyl-L-methionyl-tRNA(fMet) + (6S)-5,6,7,8-tetrahydrofolate + H(+). Its function is as follows. Attaches a formyl group to the free amino group of methionyl-tRNA(fMet). The formyl group appears to play a dual role in the initiator identity of N-formylmethionyl-tRNA by promoting its recognition by IF2 and preventing the misappropriation of this tRNA by the elongation apparatus. This Vibrio vulnificus (strain YJ016) protein is Methionyl-tRNA formyltransferase.